An 878-amino-acid polypeptide reads, in one-letter code: Calcium-transporting ATPase 1 (878 aa).

4 helical membrane-spanning segments follow: residues 50-72 (LFID…VQLF), 76-95 (FVES…VAVV), 243-263 (LGWV…LRLF), and 281-301 (FAVA…VTIV). Ca(2+)-binding residues include Val287, Ala288, Ile290, and Glu292. Catalysis depends on Asp334, which acts as the 4-aspartylphosphate intermediate. 6 consecutive transmembrane segments (helical) span residues 681-701 (LFSG…VGWV), 704-724 (FTAL…AIAL), 753-773 (VILI…YVGQ), 779-799 (MGVA…TFAA), 816-836 (YVLM…LPFL), and 845-865 (AFGW…VICM). Asn713 and Asp717 together coordinate Ca(2+).

The protein belongs to the cation transport ATPase (P-type) (TC 3.A.3) family. Type IIA subfamily.

The protein localises to the cell membrane. The enzyme catalyses Ca(2+)(in) + ATP + H2O = Ca(2+)(out) + ADP + phosphate + H(+). Its activity is regulated as follows. Inhibited by very high concentrations of cyclopiazonic acid (CPA). In terms of biological role, catalyzes the hydrolysis of ATP coupled with the transport of calcium. This Lactococcus lactis subsp. lactis (strain IL1403) (Streptococcus lactis) protein is Calcium-transporting ATPase 1 (yoaB).